A 261-amino-acid polypeptide reads, in one-letter code: Protein LIKE COV 2 (261 aa).

Residues 1–38 (MAEGKEATTSSLSQGLTPHQDPDDAPKSPPNSPNSSTR) form a disordered region. The Cytoplasmic portion of the chain corresponds to 1-56 (MAEGKEATTSSLSQGLTPHQDPDDAPKSPPNSPNSSTRKACYGVLQSWVSKKFMTG). Residues 7 to 17 (ATTSSLSQGLT) are compositionally biased toward polar residues. A helical transmembrane segment spans residues 57 to 77 (FVVLFPVAVTFLITWWFIQFV). At 78–91 (DGFFSPIYENLGVD) the chain is on the extracellular side. The helical transmembrane segment at 92–112 (IFGLGFITSVLFTFFVGIFAS) threads the bilayer. The Cytoplasmic segment spans residues 113-261 (SWLGSTVFWL…HSLRVPLNRL (149 aa)).

Belongs to the plant COV1 protein family.

It localises to the membrane. In Arabidopsis thaliana (Mouse-ear cress), this protein is Protein LIKE COV 2.